Consider the following 66-residue polypeptide: Large ribosomal subunit protein bL35 (66 aa).

It belongs to the bacterial ribosomal protein bL35 family.

The protein is Large ribosomal subunit protein bL35 of Azorhizobium caulinodans (strain ATCC 43989 / DSM 5975 / JCM 20966 / LMG 6465 / NBRC 14845 / NCIMB 13405 / ORS 571).